A 694-amino-acid chain; its full sequence is Methionine--tRNA ligase (694 aa).

The 'HIGH' region signature appears at 14–24 (PYANGPIHLGH). Positions 145, 148, 158, and 161 each coordinate Zn(2+). The short motif at 330–334 (KMSKS) is the 'KMSKS' region element. Residue Lys333 coordinates ATP. Residues 558-579 (SLQATAGQPEPHSQVRHAEHQQ) form a disordered region. Residues 593–694 (DFAKVDLRIA…EGAQPGMKVK (102 aa)) form the tRNA-binding domain.

The protein belongs to the class-I aminoacyl-tRNA synthetase family. MetG type 1 subfamily. As to quaternary structure, homodimer. Zn(2+) serves as cofactor.

It is found in the cytoplasm. It carries out the reaction tRNA(Met) + L-methionine + ATP = L-methionyl-tRNA(Met) + AMP + diphosphate. Is required not only for elongation of protein synthesis but also for the initiation of all mRNA translation through initiator tRNA(fMet) aminoacylation. The polypeptide is Methionine--tRNA ligase (Methylococcus capsulatus (strain ATCC 33009 / NCIMB 11132 / Bath)).